The chain runs to 554 residues: Perforin-1 (554 aa).

An N-terminal signal peptide occupies residues 1 to 20 (MAAYLFLLGLFLLLPRPVPA). 3 disulfide bridges follow: cysteine 22–cysteine 75, cysteine 30–cysteine 72, and cysteine 101–cysteine 175. The MACPF domain maps to 26 to 374 (TRSECKQNHK…HYVMSRARWR (349 aa)). A beta stranded transmembrane segment spans residues 128–148 (WRAGLDVNPKPEANVHVSVAG). N-linked (GlcNAc...) asparagine glycosylation occurs at asparagine 204. 4 cysteine pairs are disulfide-bonded: cysteine 241–cysteine 407, cysteine 376–cysteine 392, cysteine 380–cysteine 394, and cysteine 396–cysteine 406. Residues 256–278 (CLSVEAQVSIGAQASVSSEYKAC) form a beta stranded membrane-spanning segment. The region spanning 375 to 407 (DCNRPCRAGQHKSSRDSCQCVCQDSNVTNQDCC) is the EGF-like domain. Residues 395–513 (VCQDSNVTNQ…FHEVNCPLNH (119 aa)) form the C2 domain. The N-linked (GlcNAc...) asparagine glycan is linked to asparagine 400. Residues glycine 428, aspartate 429, threonine 432, aspartate 435, asparagine 454, aspartate 483, alanine 484, aspartate 485, tryptophan 488, aspartate 489, aspartate 490, and aspartate 491 each contribute to the Ca(2+) site. Disulfide bonds link cysteine 496-cysteine 509 and cysteine 524-cysteine 533. The N-linked (GlcNAc...) asparagine glycan is linked to asparagine 548.

The protein belongs to the complement C6/C7/C8/C9 family. In terms of assembly, monomer, as soluble protein. Homooligomer; homooligomerizes to form a pore-forming ring. It depends on Ca(2+) as a cofactor. Post-translationally, N-glycosylated. Detected in large granular lymphocytes and lymphokine-activated killer cells.

Its subcellular location is the cytolytic granule. It is found in the secreted. The protein resides in the cell membrane. The protein localises to the endosome lumen. In terms of biological role, pore-forming protein that plays a key role in granzyme-mediated programmed cell death, and in defense against virus-infected or neoplastic cells. Can insert into the membrane of target cells in its calcium-bound form, oligomerize and form large pores. Promotes cytolysis and apoptosis of target cells by mediating the passage and uptake of cytotoxic granzymes. Facilitates the delivery of cationic cargo protein, while anionic or neural proteins are not delivered efficiently. Perforin pores allow the release of mature caspase-7 (CASP7) into the extracellular milieu. The chain is Perforin-1 (Prf1) from Rattus norvegicus (Rat).